The following is a 263-amino-acid chain: Endonuclease 8 (263 aa).

The Schiff-base intermediate with DNA role is filled by P2. The active-site Proton donor is E3. K53 serves as the catalytic Proton donor; for beta-elimination activity. Positions 70, 125, and 169 each coordinate DNA. An FPG-type zinc finger spans residues 229-263 (KVFHRDGEPCERCGGIIEKTTLSSRPFYWCPGCQH). Residue R253 is the Proton donor; for delta-elimination activity of the active site.

The protein belongs to the FPG family. It depends on Zn(2+) as a cofactor.

It carries out the reaction 2'-deoxyribonucleotide-(2'-deoxyribose 5'-phosphate)-2'-deoxyribonucleotide-DNA = a 3'-end 2'-deoxyribonucleotide-(2,3-dehydro-2,3-deoxyribose 5'-phosphate)-DNA + a 5'-end 5'-phospho-2'-deoxyribonucleoside-DNA + H(+). Its function is as follows. Involved in base excision repair of DNA damaged by oxidation or by mutagenic agents. Acts as a DNA glycosylase that recognizes and removes damaged bases. Has a preference for oxidized pyrimidines, such as thymine glycol, 5,6-dihydrouracil and 5,6-dihydrothymine. Has AP (apurinic/apyrimidinic) lyase activity and introduces nicks in the DNA strand. Cleaves the DNA backbone by beta-delta elimination to generate a single-strand break at the site of the removed base with both 3'- and 5'-phosphates. This Escherichia coli (strain UTI89 / UPEC) protein is Endonuclease 8.